Reading from the N-terminus, the 1306-residue chain is DNA-directed RNA polymerase subunit beta' (1306 aa).

Cysteine 214, cysteine 285, cysteine 292, and cysteine 295 together coordinate Zn(2+). Disordered regions lie at residues 1234 to 1263 (LDNG…PNRL) and 1281 to 1306 (IARA…DDDK). The segment covering 1247-1259 (QGERDNNNSDKKP) has biased composition (basic and acidic residues).

This sequence belongs to the RNA polymerase beta' chain family. RpoC2 subfamily. In cyanobacteria the RNAP catalytic core is composed of 2 alpha, 1 beta, 1 beta', 1 gamma and 1 omega subunit. When a sigma factor is associated with the core the holoenzyme is formed, which can initiate transcription. Requires Zn(2+) as cofactor.

It catalyses the reaction RNA(n) + a ribonucleoside 5'-triphosphate = RNA(n+1) + diphosphate. In terms of biological role, DNA-dependent RNA polymerase catalyzes the transcription of DNA into RNA using the four ribonucleoside triphosphates as substrates. The protein is DNA-directed RNA polymerase subunit beta' of Crocosphaera subtropica (strain ATCC 51142 / BH68) (Cyanothece sp. (strain ATCC 51142)).